We begin with the raw amino-acid sequence, 316 residues long: Protoheme IX farnesyltransferase (316 aa).

9 consecutive transmembrane segments (helical) span residues Ile28 to Val48, Pro50 to Leu70, His99 to Val119, Leu122 to Leu142, Ile150 to Gly170, Ile178 to Ile198, Ile223 to Ala243, Cys244 to Trp264, and Ala293 to Phe313.

This sequence belongs to the UbiA prenyltransferase family. Protoheme IX farnesyltransferase subfamily.

The protein resides in the cell inner membrane. The catalysed reaction is heme b + (2E,6E)-farnesyl diphosphate + H2O = Fe(II)-heme o + diphosphate. Its pathway is porphyrin-containing compound metabolism; heme O biosynthesis; heme O from protoheme: step 1/1. Converts heme B (protoheme IX) to heme O by substitution of the vinyl group on carbon 2 of heme B porphyrin ring with a hydroxyethyl farnesyl side group. This chain is Protoheme IX farnesyltransferase, found in Microcystis aeruginosa (strain NIES-843 / IAM M-2473).